We begin with the raw amino-acid sequence, 464 residues long: Tyrosine aminotransferase (464 aa).

Lysine 284 is modified (N6-(pyridoxal phosphate)lysine).

Belongs to the class-I pyridoxal-phosphate-dependent aminotransferase family. In terms of assembly, homodimer. It depends on pyridoxal 5'-phosphate as a cofactor. In terms of tissue distribution, expressed in the muscle. Expressed in the hypodermis and intestine.

The catalysed reaction is L-tyrosine + 2-oxoglutarate = 3-(4-hydroxyphenyl)pyruvate + L-glutamate. The enzyme catalyses 3-hydroxy-L-phenylalanine + 2-oxoglutarate = 3-(3-hydroxyphenyl)pyruvate + L-glutamate. The protein operates within amino-acid degradation; L-phenylalanine degradation; acetoacetate and fumarate from L-phenylalanine: step 2/6. Functionally, transaminase involved in tyrosine breakdown. Converts tyrosine to p-hydroxyphenylpyruvate. Has no transaminase activity towards phenylalanine. Plays protective role against oxidative stress, metabolizing meta-tyrosine and negatively regulating its accumulation. Plays a role in modulating the daf-2/insulin receptor-like transduction pathway through regulating tyrosine levels. Negatively regulates dauer formation. Plays a role in longevity. In Caenorhabditis elegans, this protein is Tyrosine aminotransferase.